Here is a 229-residue protein sequence, read N- to C-terminus: NAD(P)H-hydrate epimerase (229 aa).

Residues 10–217 (AINVDQELFN…ALQRKYDLNL (208 aa)) enclose the YjeF N-terminal domain. (6S)-NADPHX is bound at residue 60-64 (NNGGD). K(+) contacts are provided by asparagine 61 and aspartate 125. (6S)-NADPHX is bound by residues 129-135 (GFSFKPP) and aspartate 158. Position 161 (serine 161) interacts with K(+).

This sequence belongs to the NnrE/AIBP family. K(+) is required as a cofactor.

The enzyme catalyses (6R)-NADHX = (6S)-NADHX. It catalyses the reaction (6R)-NADPHX = (6S)-NADPHX. Its function is as follows. Catalyzes the epimerization of the S- and R-forms of NAD(P)HX, a damaged form of NAD(P)H that is a result of enzymatic or heat-dependent hydration. This is a prerequisite for the S-specific NAD(P)H-hydrate dehydratase to allow the repair of both epimers of NAD(P)HX. The chain is NAD(P)H-hydrate epimerase from Drosophila ananassae (Fruit fly).